Consider the following 291-residue polypeptide: ATP synthase gamma chain (291 aa).

This sequence belongs to the ATPase gamma chain family. In terms of assembly, F-type ATPases have 2 components, CF(1) - the catalytic core - and CF(0) - the membrane proton channel. CF(1) has five subunits: alpha(3), beta(3), gamma(1), delta(1), epsilon(1). CF(0) has three main subunits: a, b and c.

The protein localises to the cell inner membrane. In terms of biological role, produces ATP from ADP in the presence of a proton gradient across the membrane. The gamma chain is believed to be important in regulating ATPase activity and the flow of protons through the CF(0) complex. The protein is ATP synthase gamma chain of Sphingopyxis alaskensis (strain DSM 13593 / LMG 18877 / RB2256) (Sphingomonas alaskensis).